The chain runs to 263 residues: Small ribosomal subunit protein eS4 (263 aa).

The region spanning 42-105 (LPLIIFLRNR…GENFRLIYDV (64 aa)) is the S4 RNA-binding domain.

This sequence belongs to the eukaryotic ribosomal protein eS4 family. Component of the small ribosomal subunit. Part of the small subunit (SSU) processome, composed of more than 70 proteins and the RNA chaperone small nucleolar RNA (snoRNA) U3.

The protein localises to the cytoplasm. It is found in the nucleus. The protein resides in the nucleolus. In terms of biological role, component of the small ribosomal subunit. The ribosome is a large ribonucleoprotein complex responsible for the synthesis of proteins in the cell. Part of the small subunit (SSU) processome, first precursor of the small eukaryotic ribosomal subunit. During the assembly of the SSU processome in the nucleolus, many ribosome biogenesis factors, an RNA chaperone and ribosomal proteins associate with the nascent pre-rRNA and work in concert to generate RNA folding, modifications, rearrangements and cleavage as well as targeted degradation of pre-ribosomal RNA by the RNA exosome. This Danio rerio (Zebrafish) protein is Small ribosomal subunit protein eS4 (rps4x).